The following is a 268-amino-acid chain: NADPH-dependent 7-cyano-7-deazaguanine reductase (268 aa).

Residue 79–81 (VES) participates in substrate binding. 81 to 82 (SK) contributes to the NADPH binding site. Cys-176 serves as the catalytic Thioimide intermediate. Residue Asp-183 is the Proton donor of the active site. 215-216 (HE) is a binding site for substrate. An NADPH-binding site is contributed by 244–245 (RG).

Belongs to the GTP cyclohydrolase I family. QueF type 2 subfamily. In terms of assembly, homodimer.

Its subcellular location is the cytoplasm. It catalyses the reaction 7-aminomethyl-7-carbaguanine + 2 NADP(+) = 7-cyano-7-deazaguanine + 2 NADPH + 3 H(+). It functions in the pathway tRNA modification; tRNA-queuosine biosynthesis. In terms of biological role, catalyzes the NADPH-dependent reduction of 7-cyano-7-deazaguanine (preQ0) to 7-aminomethyl-7-deazaguanine (preQ1). The polypeptide is NADPH-dependent 7-cyano-7-deazaguanine reductase (Saccharophagus degradans (strain 2-40 / ATCC 43961 / DSM 17024)).